The sequence spans 92 residues: Large ribosomal subunit protein bL34m (92 aa).

Residues 1-46 (MAVLAGSLLGPTSRSAALLGGRWLQPRAWLGFPDAWGLPTPQQARG) constitute a mitochondrion transit peptide. Position 71 is a phosphoserine (Ser71).

It belongs to the bacterial ribosomal protein bL34 family. As to quaternary structure, component of the mitochondrial large ribosomal subunit (mt-LSU). Mature mammalian 55S mitochondrial ribosomes consist of a small (28S) and a large (39S) subunit. The 28S small subunit contains a 12S ribosomal RNA (12S mt-rRNA) and 30 different proteins. The 39S large subunit contains a 16S rRNA (16S mt-rRNA), a copy of mitochondrial valine transfer RNA (mt-tRNA(Val)), which plays an integral structural role, and 52 different proteins.

It is found in the mitochondrion. The polypeptide is Large ribosomal subunit protein bL34m (MRPL34) (Homo sapiens (Human)).